The following is a 254-amino-acid chain: 5'/3'-nucleotidase SurE (254 aa).

A divalent metal cation is bound by residues Asp-9, Asp-10, Ser-40, and Asn-93.

Belongs to the SurE nucleotidase family. Requires a divalent metal cation as cofactor.

It is found in the cytoplasm. It catalyses the reaction a ribonucleoside 5'-phosphate + H2O = a ribonucleoside + phosphate. It carries out the reaction a ribonucleoside 3'-phosphate + H2O = a ribonucleoside + phosphate. The catalysed reaction is [phosphate](n) + H2O = [phosphate](n-1) + phosphate + H(+). Functionally, nucleotidase with a broad substrate specificity as it can dephosphorylate various ribo- and deoxyribonucleoside 5'-monophosphates and ribonucleoside 3'-monophosphates with highest affinity to 3'-AMP. Also hydrolyzes polyphosphate (exopolyphosphatase activity) with the preference for short-chain-length substrates (P20-25). Might be involved in the regulation of dNTP and NTP pools, and in the turnover of 3'-mononucleotides produced by numerous intracellular RNases (T1, T2, and F) during the degradation of various RNAs. This Proteus mirabilis (strain HI4320) protein is 5'/3'-nucleotidase SurE.